A 293-amino-acid polypeptide reads, in one-letter code: Methylsterol monooxygenase 1 (293 aa).

2 consecutive transmembrane segments (helical) span residues 55 to 75 and 100 to 120; these read LIVH…FQFI and GILF…YYFT. Residues 144–274 form the Fatty acid hydroxylase domain; sequence GCAVIEDTWH…FTWWDRIFGT (131 aa). Positions 157–161 match the Histidine box-1 motif; it reads HRLLH. The Histidine box-2 signature appears at 170 to 174; that stretch reads HKVHH. The chain crosses the membrane as a helical span at residues 199-219; sequence FFIGIVLLCDHVILLWAWVTM. Positions 249-255 match the Histidine box-3 motif; sequence HHDFHHM.

The protein belongs to the sterol desaturase family. Fe cation serves as cofactor. In terms of processing, ubiquitinated by MARCHF6, leading to proteasomal degradation.

The protein resides in the endoplasmic reticulum membrane. The catalysed reaction is 4,4-dimethyl-5alpha-cholest-7-en-3beta-ol + 6 Fe(II)-[cytochrome b5] + 3 O2 + 5 H(+) = 4alpha-carboxy-4beta-methyl-5alpha-cholest-7-ene-3beta-ol + 6 Fe(III)-[cytochrome b5] + 4 H2O. It carries out the reaction 4,4-dimethyl-5alpha-cholesta-8,24-dien-3beta-ol + 6 Fe(II)-[cytochrome b5] + 3 O2 + 5 H(+) = 4beta-methylzymosterol-4alpha-carboxylate + 6 Fe(III)-[cytochrome b5] + 4 H2O. It catalyses the reaction 4alpha-methylzymosterol + 6 Fe(II)-[cytochrome b5] + 3 O2 + 5 H(+) = 4alpha-carboxyzymosterol + 6 Fe(III)-[cytochrome b5] + 4 H2O. The enzyme catalyses 4alpha-methyl-5alpha-cholest-7-en-3beta-ol + 6 Fe(II)-[cytochrome b5] + 3 O2 + 5 H(+) = 4alpha-carboxy-5alpha-cholest-7-en-3beta-ol + 6 Fe(III)-[cytochrome b5] + 4 H2O. The catalysed reaction is 4,4-dimethyl-5alpha-cholest-8-en-3beta-ol + 6 Fe(II)-[cytochrome b5] + 3 O2 + 5 H(+) = 4alpha-carboxy-4beta-methyl-5alpha-cholest-8-en-3beta-ol + 6 Fe(III)-[cytochrome b5] + 4 H2O. It carries out the reaction 4alpha-methyl-5alpha-cholest-8-en-3beta-ol + 6 Fe(II)-[cytochrome b5] + 3 O2 + 5 H(+) = 4alpha-carboxy-5alpha-cholest-8-ene-3beta-ol + 6 Fe(III)-[cytochrome b5] + 4 H2O. It participates in steroid biosynthesis; zymosterol biosynthesis; zymosterol from lanosterol: step 3/6. The protein operates within steroid biosynthesis; cholesterol biosynthesis. Catalyzes the three-step monooxygenation required for the demethylation of 4,4-dimethyl and 4alpha-methylsterols, which can be subsequently metabolized to cholesterol. This Rattus norvegicus (Rat) protein is Methylsterol monooxygenase 1 (Msmo1).